The sequence spans 500 residues: Cytochrome P450 monooxygenase hepD (500 aa).

The helical transmembrane segment at 15-35 threads the bilayer; it reads WILLSLSLAFIVVYSLFYLAV. 4 N-linked (GlcNAc...) asparagine glycosylation sites follow: Asn-99, Asn-185, Asn-373, and Asn-409. Cys-445 contributes to the heme binding site. Asn-482 is a glycosylation site (N-linked (GlcNAc...) asparagine).

It belongs to the cytochrome P450 family. It depends on heme as a cofactor.

The protein localises to the membrane. The protein operates within secondary metabolite biosynthesis. In terms of biological role, cytochrome P450 monooxygenase; part of the gene cluster that mediates the biosynthesis of heptelidic acid (HA), a sesquiterpene lactone that acts as an inhibitor of glyceraldehyde-3-phosphatedehydrogenase (GAPDH) and a growth inhibitor of the salt-tolerant lactic acid bacteria in soy sauce brewing. This chain is Cytochrome P450 monooxygenase hepD, found in Aspergillus oryzae (strain ATCC 42149 / RIB 40) (Yellow koji mold).